We begin with the raw amino-acid sequence, 284 residues long: 2-dehydro-3-deoxyphosphooctonate aldolase (284 aa).

Belongs to the KdsA family.

The protein localises to the cytoplasm. It catalyses the reaction D-arabinose 5-phosphate + phosphoenolpyruvate + H2O = 3-deoxy-alpha-D-manno-2-octulosonate-8-phosphate + phosphate. It participates in carbohydrate biosynthesis; 3-deoxy-D-manno-octulosonate biosynthesis; 3-deoxy-D-manno-octulosonate from D-ribulose 5-phosphate: step 2/3. Its pathway is bacterial outer membrane biogenesis; lipopolysaccharide biosynthesis. The protein is 2-dehydro-3-deoxyphosphooctonate aldolase of Aliivibrio fischeri (strain ATCC 700601 / ES114) (Vibrio fischeri).